Reading from the N-terminus, the 148-residue chain is uncharacterized protein (148 aa).

It belongs to the IIV-6 395R family.

This is an uncharacterized protein from Aedes vexans (Inland floodwater mosquito).